The following is a 101-amino-acid chain: Phosphoribosyl-AMP cyclohydrolase (101 aa).

Asp71 contacts Mg(2+). Cys72 provides a ligand contact to Zn(2+). Residues Asp73 and Asp75 each contribute to the Mg(2+) site. Zn(2+) contacts are provided by Cys88 and Cys95.

This sequence belongs to the PRA-CH family. As to quaternary structure, homodimer. Requires Mg(2+) as cofactor. The cofactor is Zn(2+).

Its subcellular location is the cytoplasm. It catalyses the reaction 1-(5-phospho-beta-D-ribosyl)-5'-AMP + H2O = 1-(5-phospho-beta-D-ribosyl)-5-[(5-phospho-beta-D-ribosylamino)methylideneamino]imidazole-4-carboxamide. It participates in amino-acid biosynthesis; L-histidine biosynthesis; L-histidine from 5-phospho-alpha-D-ribose 1-diphosphate: step 3/9. In terms of biological role, catalyzes the hydrolysis of the adenine ring of phosphoribosyl-AMP. This Bacillus cytotoxicus (strain DSM 22905 / CIP 110041 / 391-98 / NVH 391-98) protein is Phosphoribosyl-AMP cyclohydrolase.